The sequence spans 906 residues: Eukaryotic translation initiation factor 4 gamma 2 (906 aa).

Residue Met-1 is modified to N-acetylmethionine. The tract at residues 1–71 is disordered; that stretch reads MESAIAEGGA…SAANNSANEK (71 aa). A Phosphoserine modification is found at Ser-11. The MIF4G domain maps to 78-308; the sequence is FRKVRGILNK…QDTVELREHH (231 aa). Position 89 is a phosphothreonine (Thr-89). Arg-359 carries the post-translational modification Omega-N-methylarginine. At Ser-394 the chain carries Phosphoserine. Lys-430 is modified (N6-methyllysine). At Ser-442 the chain carries Phosphoserine. The tract at residues 497–540 is disordered; that stretch reads PPSAQPPRTQTPPLGQTPQLGLKTNPPLIQEKPAKTSKKPPPSK. Residues 502 to 515 are compositionally biased toward polar residues; it reads PPRTQTPPLGQTPQ. The residue at position 504 (Arg-504) is an Omega-N-methylarginine. Residues Thr-507 and Thr-513 each carry the phosphothreonine modification. The MI domain maps to 542–665; that stretch reads ELLKLTEAVV…SISELAQPLE (124 aa). Lys-574 is covalently cross-linked (Glycyl lysine isopeptide (Lys-Gly) (interchain with G-Cter in SUMO2)). A W2 domain is found at 719–903; it reads EGKGLSFLFP…ETAEEEESEE (185 aa). Position 901 is a phosphoserine (Ser-901).

This sequence belongs to the eukaryotic initiation factor 4G family. In terms of assembly, interacts with the serine/threonine protein kinases MKNK1 and MKNK2. Binds EIF4A and EIF3. Interacts with MIF4GD. Interacts with DAZAP2. Phosphorylation; hyperphosphorylated during mitosis. Ubiquitously expressed in all tissues examined.

Appears to play a role in the switch from cap-dependent to IRES-mediated translation during mitosis, apoptosis and viral infection. Cleaved by some caspases and viral proteases. The sequence is that of Eukaryotic translation initiation factor 4 gamma 2 from Mus musculus (Mouse).